The primary structure comprises 48 residues: ATP synthase protein 8 (48 aa).

The chain crosses the membrane as a helical span at residues 12–32 (QLTYGLLLITVLLILFSQFFL).

The protein belongs to the ATPase protein 8 family. As to quaternary structure, F-type ATPases have 2 components, CF(1) - the catalytic core - and CF(0) - the membrane proton channel.

It is found in the mitochondrion membrane. In terms of biological role, mitochondrial membrane ATP synthase (F(1)F(0) ATP synthase or Complex V) produces ATP from ADP in the presence of a proton gradient across the membrane which is generated by electron transport complexes of the respiratory chain. F-type ATPases consist of two structural domains, F(1) - containing the extramembraneous catalytic core and F(0) - containing the membrane proton channel, linked together by a central stalk and a peripheral stalk. During catalysis, ATP synthesis in the catalytic domain of F(1) is coupled via a rotary mechanism of the central stalk subunits to proton translocation. Part of the complex F(0) domain. Minor subunit located with subunit a in the membrane. The protein is ATP synthase protein 8 (ATP8) of Candida glabrata (strain ATCC 2001 / BCRC 20586 / JCM 3761 / NBRC 0622 / NRRL Y-65 / CBS 138) (Yeast).